The following is a 429-amino-acid chain: Xaa-Pro dipeptidase (429 aa).

Mn(2+) is bound by residues aspartate 241, aspartate 252, histidine 334, glutamate 372, and glutamate 411.

Belongs to the peptidase M24B family. Bacterial-type prolidase subfamily. The cofactor is Mn(2+).

It catalyses the reaction Xaa-L-Pro dipeptide + H2O = an L-alpha-amino acid + L-proline. Splits dipeptides with a prolyl residue in the C-terminal position. This chain is Xaa-Pro dipeptidase, found in Marinobacter nauticus (strain ATCC 700491 / DSM 11845 / VT8) (Marinobacter aquaeolei).